Here is a 73-residue protein sequence, read N- to C-terminus: UPF0435 protein lin1819 (73 aa).

The protein belongs to the UPF0435 family.

The polypeptide is UPF0435 protein lin1819 (Listeria innocua serovar 6a (strain ATCC BAA-680 / CLIP 11262)).